The following is a 667-amino-acid chain: MGQTKSKTKSKYASYLSFIKILLKRGGVRVSTKNLIKLFQIIEQFCPWFPEQGTLDLKDWKRIGEELKQAGRKGNIIPLTVWNDWAIIKAALEPFQTKEDSVSVSDAPGSCVIDCNEKTGRKSQKETESLHCEYVTEPVMAQSTQNVDYNQLQGVIYPETLKLEGKGPELVGPSESKPRGPSPLPAGQVPVTLQPQTQVKENKTQPPVAYQYWPPAELQYLPPPESQYGYPGMPPALQGRAPYPQPPTVRLNPTASRSGQGGTLHAVIDEARKQGDLEAWRFLVILQLVQAGEETQVGAPARAETRCEPFTMKMLKDIKEGVKQYGSNSPYIRTLLDSIAHGNRLTPYDWESLAKSSLSSSQYLQFKTWWIDGVQEQVRKNQATKPTVNIDADQLLGTGPNWSTINQQSVMQNEAIEQVRAICLRAWGKIQDPGTAFPINSIRQGSKEPYPDFVARLQDAAQKSITDDNARKVIVELMAYENANPECQSAIKPLKGKVPAGVDVITEYVKACDGIGGAMHKAMLMAQAMRGLTLGGQVRTFGKKCYNCGQIGHLKRSCPVLNKQNIINQAITAKNKKPSGLCPKCGKGKHWANQCHSKFDKDGQPLSGNRKRGQPQAPQQTGAFPVQLFVPQGFQGQQPLQKIPPLQGVSQLQQSNSCPAPQQAAPQ.

A lipid anchor (N-myristoyl glycine) is attached at Gly-2. The segment at 166–188 (KGPELVGPSESKPRGPSPLPAGQ) is disordered. 2 consecutive CCHC-type zinc fingers follow at residues 543–560 (KKCYNCGQIGHLKRSCPV) and 580–597 (GLCPKCGKGKHWANQCHS). A disordered region spans residues 598–667 (KFDKDGQPLS…CPAPQQAAPQ (70 aa)). Residues 648–667 (GVSQLQQSNSCPAPQQAAPQ) are compositionally biased toward polar residues.

It belongs to the beta type-B retroviral Gag protein family. HERV class-II K(HML-2) gag subfamily. In terms of processing, myristoylation is essential for retroviral assembly. Alteration of the glycine residue leads to a block in the budding of particles and an accumulation of Gag inside the cell. Post-translationally, specific enzymatic cleavages may yield mature proteins.

The protein localises to the cell membrane. In terms of biological role, the products of the Gag polyproteins of infectious retroviruses perform highly complex orchestrated tasks during the assembly, budding, maturation, and infection stages of the viral replication cycle. During viral assembly, the proteins form membrane associations and self-associations that ultimately result in budding of an immature virion from the infected cell. Gag precursors also function during viral assembly to selectively bind and package two plus strands of genomic RNA. Endogenous Gag proteins may have kept, lost or modified their original function during evolution. The chain is Endogenous retrovirus group K member 5 Gag polyprotein (ERVK-5) from Homo sapiens (Human).